A 971-amino-acid chain; its full sequence is Exportin-2 (971 aa).

The Importin N-terminal domain maps to 29–102 (AEKYLESVEG…KSSIINLMLR (74 aa)).

Belongs to the XPO2/CSE1 family.

The protein resides in the cytoplasm. Its subcellular location is the nucleus. In terms of biological role, export receptor for importin alpha. Mediates importin-alpha re-export from the nucleus to the cytoplasm after import substrates have been released into the nucleoplasm. The sequence is that of Exportin-2 (cse1l) from Xenopus laevis (African clawed frog).